The following is a 228-amino-acid chain: Triosephosphate isomerase (228 aa).

12–14 (NFK) is a binding site for substrate. Residue His-96 is the Electrophile of the active site. The Proton acceptor role is filled by Glu-144. Substrate contacts are provided by residues Ile-149, Gly-184, and 205–206 (AS).

This sequence belongs to the triosephosphate isomerase family. Homotetramer; dimer of dimers.

It localises to the cytoplasm. The catalysed reaction is D-glyceraldehyde 3-phosphate = dihydroxyacetone phosphate. The protein operates within carbohydrate biosynthesis; gluconeogenesis. It functions in the pathway carbohydrate degradation; glycolysis; D-glyceraldehyde 3-phosphate from glycerone phosphate: step 1/1. Functionally, involved in the gluconeogenesis. Catalyzes stereospecifically the conversion of dihydroxyacetone phosphate (DHAP) to D-glyceraldehyde-3-phosphate (G3P). The chain is Triosephosphate isomerase from Pyrococcus furiosus (strain ATCC 43587 / DSM 3638 / JCM 8422 / Vc1).